We begin with the raw amino-acid sequence, 71 residues long: Conotoxin AbVIG (71 aa).

The N-terminal stretch at 1-17 (VLIIAVLFLTACQLTTA) is a signal peptide. Residues 18–40 (ETSSRGKQKHRALRSTDKNSRMT) constitute a propeptide that is removed on maturation. Disulfide bonds link C43–C57, C50–C61, and C56–C68.

This sequence belongs to the conotoxin O1 superfamily. Expressed by the venom duct.

Its subcellular location is the secreted. The chain is Conotoxin AbVIG from Conus abbreviatus (Abbreviated cone).